A 549-amino-acid chain; its full sequence is Glucose-6-phosphate isomerase (549 aa).

The active-site Proton donor is Glu355. Residues His386 and Lys514 contribute to the active site.

Belongs to the GPI family.

Its subcellular location is the cytoplasm. The enzyme catalyses alpha-D-glucose 6-phosphate = beta-D-fructose 6-phosphate. It functions in the pathway carbohydrate biosynthesis; gluconeogenesis. Its pathway is carbohydrate degradation; glycolysis; D-glyceraldehyde 3-phosphate and glycerone phosphate from D-glucose: step 2/4. Functionally, catalyzes the reversible isomerization of glucose-6-phosphate to fructose-6-phosphate. This Aeromonas salmonicida (strain A449) protein is Glucose-6-phosphate isomerase.